Reading from the N-terminus, the 445-residue chain is Tubulin beta chain (445 aa).

Gln11, Glu69, Ser138, Gly142, Thr143, Gly144, Asn204, and Asn226 together coordinate GTP. Mg(2+) is bound at residue Glu69.

It belongs to the tubulin family. In terms of assembly, dimer of alpha and beta chains. A typical microtubule is a hollow water-filled tube with an outer diameter of 25 nm and an inner diameter of 15 nM. Alpha-beta heterodimers associate head-to-tail to form protofilaments running lengthwise along the microtubule wall with the beta-tubulin subunit facing the microtubule plus end conferring a structural polarity. Microtubules usually have 13 protofilaments but different protofilament numbers can be found in some organisms and specialized cells. The cofactor is Mg(2+).

The protein resides in the cytoplasm. The protein localises to the cytoskeleton. Functionally, tubulin is the major constituent of microtubules, a cylinder consisting of laterally associated linear protofilaments composed of alpha- and beta-tubulin heterodimers. Microtubules grow by the addition of GTP-tubulin dimers to the microtubule end, where a stabilizing cap forms. Below the cap, tubulin dimers are in GDP-bound state, owing to GTPase activity of alpha-tubulin. The sequence is that of Tubulin beta chain from Leishmania mexicana.